Consider the following 163-residue polypeptide: Deoxyuridine 5'-triphosphate nucleotidohydrolase (163 aa).

It belongs to the dUTPase family. The cofactor is Mg(2+).

The catalysed reaction is dUTP + H2O = dUMP + diphosphate + H(+). Its pathway is pyrimidine metabolism; dUMP biosynthesis; dUMP from dCTP (dUTP route): step 2/2. This enzyme is involved in nucleotide metabolism: it produces dUMP, the immediate precursor of thymidine nucleotides and it decreases the intracellular concentration of dUTP so that uracil cannot be incorporated into DNA. The sequence is that of Deoxyuridine 5'-triphosphate nucleotidohydrolase from Galliformes (FAdV-8).